The sequence spans 248 residues: Probable septum site-determining protein MinC (248 aa).

Residues 94–125 (GMPPAMRGGQPAADFEAPAGEPQANPGAPEPQ) form a disordered region.

Belongs to the MinC family. As to quaternary structure, interacts with MinD and FtsZ.

Functionally, cell division inhibitor that blocks the formation of polar Z ring septums. Rapidly oscillates between the poles of the cell to destabilize FtsZ filaments that have formed before they mature into polar Z rings. Prevents FtsZ polymerization. The chain is Probable septum site-determining protein MinC from Brucella abortus (strain S19).